A 160-amino-acid polypeptide reads, in one-letter code: Cytochrome b6-f complex subunit 4 (160 aa).

A run of 3 helical transmembrane segments spans residues 36–56 (IFYMFPVVIFGTFAGVIGLAV), 96–116 (LGVLLMAAVPAGLITVPFIKI), and 131–151 (TVFLVGTVAAIWLGIGAALPI).

Belongs to the cytochrome b family. PetD subfamily. As to quaternary structure, the 4 large subunits of the cytochrome b6-f complex are cytochrome b6, subunit IV (17 kDa polypeptide, petD), cytochrome f and the Rieske protein, while the 4 small subunits are petG, petL, petM and petN. The complex functions as a dimer.

It localises to the plastid. The protein resides in the chloroplast thylakoid membrane. Component of the cytochrome b6-f complex, which mediates electron transfer between photosystem II (PSII) and photosystem I (PSI), cyclic electron flow around PSI, and state transitions. This is Cytochrome b6-f complex subunit 4 from Auxenochlorella protothecoides (Green microalga).